Reading from the N-terminus, the 726-residue chain is Cyclic nucleotide-gated ion channel 2 (726 aa).

Topologically, residues Met1 to Ala127 are cytoplasmic. The interval Ile26–Glu46 is disordered. The span at Gly36–Asp45 shows a compositional bias: low complexity. The helical transmembrane segment at Leu128–Ile148 threads the bilayer. The Extracellular portion of the chain corresponds to Gly149–Ala162. Residues Phe163–Trp183 traverse the membrane as a helical segment. Residues Leu184–Thr219 lie on the Cytoplasmic side of the membrane. A helical transmembrane segment spans residues Gly220–Val240. The Extracellular portion of the chain corresponds to Pro241–Thr254. The chain crosses the membrane as a helical span at residues Ile255 to Met275. Over Arg276–Thr282 the chain is Cytoplasmic. The helical transmembrane segment at Gly283–Ala303 threads the bilayer. Over Ser304–Trp424 the chain is Extracellular. Residues Leu425–Ile445 traverse the membrane as a helical segment. Residues Gly446–Glu726 are Cytoplasmic-facing. A nucleoside 3',5'-cyclic phosphate is bound by residues Leu531–Tyr661 and Asp600. The calmodulin-binding stretch occupies residues Phe645–Tyr661. In terms of domain architecture, IQ spans Arg666–Pro695.

Belongs to the cyclic nucleotide-gated cation channel (TC 1.A.1.5) family. As to quaternary structure, homotetramer or heterotetramer (Potential). Binds calmodulin-1/4 with a higher affinity than calmodulin-2/3/5. Expressed in the whole plant but only weakly in roots. Strongly expressed in the expanded cotyledons of 14-day-old seedlings and detected later in leaves after the transition to flowering. Also detected in flowers during organ senescence and in the dehiscence zone of siliques.

It is found in the cell membrane. In terms of biological role, acts as a cyclic nucleotide-gated ion channel. Permeable to potassium and calcium in a cyclic nucleotide-dependent fashion (cAMP or cGMP). Could also transport lithium, cesium and rubium and displays a strong selectivity against sodium. Seems to directly participate in pathogen-induced calcium influx. May function in homeostasis, re-establishing ionic balance after defense action and/or other stimuli. Could mediate the initiation of the developmentally regulated cell death programs. The chain is Cyclic nucleotide-gated ion channel 2 (CNGC2) from Arabidopsis thaliana (Mouse-ear cress).